Consider the following 618-residue polypeptide: DnaJ homolog subfamily C member 2 (618 aa).

One can recognise a J domain in the interval 85–158; the sequence is DHYAVLGLAH…VKRRAFDSVD (74 aa). Disordered regions lie at residues 281 to 315, 330 to 349, and 419 to 448; these read KEEE…QQEE, QAAQ…IKKE, and LQKE…QNNR. The span at 428–448 shows a compositional bias: polar residues; it reads QAQQAARGSEHSSAAGGQNNR. SANT domains lie at 445–507 and 548–603; these read QNNR…KLDP and SNAA…EMIK.

In terms of assembly, component of ribosome-associated complex (RAC).

The protein resides in the nucleus. It localises to the cytoplasm. The protein localises to the cytosol. Functionally, acts both as a chaperone in the cytosol and as a chromatin regulator in the nucleus. When cytosolic, acts as a molecular chaperone: component of the ribosome-associated complex (RAC), a complex involved in folding or maintaining nascent polypeptides in a folding-competent state. When nuclear, mediates the switching from polycomb-repressed genes to an active state: specifically recruited at histone H2A ubiquitinated at 'Lys-119' (H2AK119ub), and promotes the displacement of the polycomb PRC1 complex from chromatin, thereby facilitating transcription activation. The chain is DnaJ homolog subfamily C member 2 (dnajc2) from Danio rerio (Zebrafish).